The chain runs to 384 residues: Protein Brevis radix-like 4 (384 aa).

Disordered stretches follow at residues 1 to 35 (MLTCIARSKRAGDESSGQPDDPDSKNAKSLTSQLK) and 50 to 78 (PCTAAQGQGQGQGPIKNNPSSSSVKSDFE). In terms of domain architecture, BRX 1 spans 150 to 205 (KEWVAQVEPGVLITFVSLPGGGNDLKRIRFSRDMFNKLQAQRWWADNYDKVMELYN). 2 disordered regions span residues 214–270 (FPLP…DHNS) and 304–325 (SIRSSSSRDADRSEEMSVSNAS). Basic and acidic residues predominate over residues 221–235 (RSEDENAKVEYHPED). Positions 260-270 (YSSSDSLDHNS) are enriched in polar residues. The segment covering 309 to 318 (SSRDADRSEE) has biased composition (basic and acidic residues). Residues 329-384 (NEWVEQDEPGVYITIKVLPGGKRELRRVRFSRERFGEMHARLWWEENRARIHEQYL) enclose the BRX 2 domain.

This sequence belongs to the BRX family. In terms of tissue distribution, expressed in roots.

It is found in the nucleus. The sequence is that of Protein Brevis radix-like 4 (BRXL4) from Arabidopsis thaliana (Mouse-ear cress).